The following is an 89-amino-acid chain: Large ribosomal subunit protein bL31B (89 aa).

This sequence belongs to the bacterial ribosomal protein bL31 family. Type B subfamily. In terms of assembly, part of the 50S ribosomal subunit.

In Aeromonas hydrophila subsp. hydrophila (strain ATCC 7966 / DSM 30187 / BCRC 13018 / CCUG 14551 / JCM 1027 / KCTC 2358 / NCIMB 9240 / NCTC 8049), this protein is Large ribosomal subunit protein bL31B.